Reading from the N-terminus, the 344-residue chain is Methionine import ATP-binding protein MetN 1 (344 aa).

The ABC transporter domain maps to 2–241 (IELRNLSQRF…PHHEVTRALI (240 aa)). 38-45 (GRSGAGKS) provides a ligand contact to ATP.

Belongs to the ABC transporter superfamily. Methionine importer (TC 3.A.1.24) family. As to quaternary structure, the complex is composed of two ATP-binding proteins (MetN), two transmembrane proteins (MetI) and a solute-binding protein (MetQ).

The protein localises to the cell inner membrane. It catalyses the reaction L-methionine(out) + ATP + H2O = L-methionine(in) + ADP + phosphate + H(+). The catalysed reaction is D-methionine(out) + ATP + H2O = D-methionine(in) + ADP + phosphate + H(+). Functionally, part of the ABC transporter complex MetNIQ involved in methionine import. Responsible for energy coupling to the transport system. This is Methionine import ATP-binding protein MetN 1 from Burkholderia orbicola (strain AU 1054).